A 156-amino-acid polypeptide reads, in one-letter code: Ribosome-binding factor A (156 aa).

The segment at 124–156 (TRAEYAGEAQPYRLEEEPEGSGDEVPPPGGDQR) is disordered.

This sequence belongs to the RbfA family. As to quaternary structure, monomer. Binds 30S ribosomal subunits, but not 50S ribosomal subunits or 70S ribosomes.

It is found in the cytoplasm. Its function is as follows. One of several proteins that assist in the late maturation steps of the functional core of the 30S ribosomal subunit. Associates with free 30S ribosomal subunits (but not with 30S subunits that are part of 70S ribosomes or polysomes). Required for efficient processing of 16S rRNA. May interact with the 5'-terminal helix region of 16S rRNA. This is Ribosome-binding factor A from Salinispora tropica (strain ATCC BAA-916 / DSM 44818 / JCM 13857 / NBRC 105044 / CNB-440).